The sequence spans 978 residues: Glycine dehydrogenase (decarboxylating) (978 aa).

Lysine 726 is modified (N6-(pyridoxal phosphate)lysine).

It belongs to the GcvP family. As to quaternary structure, the glycine cleavage system is composed of four proteins: P, T, L and H. It depends on pyridoxal 5'-phosphate as a cofactor.

It catalyses the reaction N(6)-[(R)-lipoyl]-L-lysyl-[glycine-cleavage complex H protein] + glycine + H(+) = N(6)-[(R)-S(8)-aminomethyldihydrolipoyl]-L-lysyl-[glycine-cleavage complex H protein] + CO2. In terms of biological role, the glycine cleavage system catalyzes the degradation of glycine. The P protein binds the alpha-amino group of glycine through its pyridoxal phosphate cofactor; CO(2) is released and the remaining methylamine moiety is then transferred to the lipoamide cofactor of the H protein. This is Glycine dehydrogenase (decarboxylating) from Paraburkholderia phytofirmans (strain DSM 17436 / LMG 22146 / PsJN) (Burkholderia phytofirmans).